The primary structure comprises 209 residues: Uracil phosphoribosyltransferase (209 aa).

5-phospho-alpha-D-ribose 1-diphosphate-binding positions include Arg79, Arg104, and 131–139 (DPMLATGGS). Uracil contacts are provided by residues Ile194 and 199–201 (GDA). Residue Asp200 coordinates 5-phospho-alpha-D-ribose 1-diphosphate.

This sequence belongs to the UPRTase family. Mg(2+) serves as cofactor.

The catalysed reaction is UMP + diphosphate = 5-phospho-alpha-D-ribose 1-diphosphate + uracil. It participates in pyrimidine metabolism; UMP biosynthesis via salvage pathway; UMP from uracil: step 1/1. Its activity is regulated as follows. Allosterically activated by GTP. Catalyzes the conversion of uracil and 5-phospho-alpha-D-ribose 1-diphosphate (PRPP) to UMP and diphosphate. This chain is Uracil phosphoribosyltransferase, found in Streptococcus agalactiae serotype III (strain NEM316).